The chain runs to 333 residues: MCMTSPDQLTASESADTASAHKRVLVAAPRGYCAGVDRAVETVEKALEKYGAPVYVRKEIVHNRYVVDTLAERGAIFVDETTEAPEGAHLVFSAHGVSPAVHKEAEALSLKTLDATCPLVTKVHNEVKRFARDGYHILLVGHEGHEEVEGTAGEAPDVTHLVDGVESVDKLPEFLHDEKLIWLSQTTLSVDETMTIVKKLHERFAHLQDPPSDDICYATQNRQVAVKAIAAESDVVIVVGSQNSSNSKRLVEVALQAGAGASYLVDYAHQIDESWLDGATTVGVSSGASVPEILVRGVLEFLDARGFHDVKEITTAAEKITFALPRDLRPART.

Cys33 is a binding site for [4Fe-4S] cluster. Positions 62 and 95 each coordinate (2E)-4-hydroxy-3-methylbut-2-enyl diphosphate. The dimethylallyl diphosphate site is built by His62 and His95. Isopentenyl diphosphate contacts are provided by His62 and His95. Cys117 lines the [4Fe-4S] cluster pocket. His145 lines the (2E)-4-hydroxy-3-methylbut-2-enyl diphosphate pocket. Residue His145 participates in dimethylallyl diphosphate binding. Residue His145 coordinates isopentenyl diphosphate. Catalysis depends on Glu147, which acts as the Proton donor. Thr186 serves as a coordination point for (2E)-4-hydroxy-3-methylbut-2-enyl diphosphate. Cys216 lines the [4Fe-4S] cluster pocket. (2E)-4-hydroxy-3-methylbut-2-enyl diphosphate-binding residues include Ser244, Ser245, Asn246, and Ser289. Positions 244, 245, 246, and 289 each coordinate dimethylallyl diphosphate. Positions 244, 245, 246, and 289 each coordinate isopentenyl diphosphate.

It belongs to the IspH family. [4Fe-4S] cluster is required as a cofactor.

The enzyme catalyses isopentenyl diphosphate + 2 oxidized [2Fe-2S]-[ferredoxin] + H2O = (2E)-4-hydroxy-3-methylbut-2-enyl diphosphate + 2 reduced [2Fe-2S]-[ferredoxin] + 2 H(+). The catalysed reaction is dimethylallyl diphosphate + 2 oxidized [2Fe-2S]-[ferredoxin] + H2O = (2E)-4-hydroxy-3-methylbut-2-enyl diphosphate + 2 reduced [2Fe-2S]-[ferredoxin] + 2 H(+). It functions in the pathway isoprenoid biosynthesis; dimethylallyl diphosphate biosynthesis; dimethylallyl diphosphate from (2E)-4-hydroxy-3-methylbutenyl diphosphate: step 1/1. The protein operates within isoprenoid biosynthesis; isopentenyl diphosphate biosynthesis via DXP pathway; isopentenyl diphosphate from 1-deoxy-D-xylulose 5-phosphate: step 6/6. In terms of biological role, catalyzes the conversion of 1-hydroxy-2-methyl-2-(E)-butenyl 4-diphosphate (HMBPP) into a mixture of isopentenyl diphosphate (IPP) and dimethylallyl diphosphate (DMAPP). Acts in the terminal step of the DOXP/MEP pathway for isoprenoid precursor biosynthesis. The chain is 4-hydroxy-3-methylbut-2-enyl diphosphate reductase from Corynebacterium diphtheriae (strain ATCC 700971 / NCTC 13129 / Biotype gravis).